The following is a 110-amino-acid chain: CHH-like protein (110 aa).

Residues 1–23 form the signal peptide; it reads MHLSSVQFAWAALVALAVSAAGA. Positions 24 to 35 are excised as a propeptide; it reads LPSSAPHHVERR. 3 disulfides stabilise this stretch: cysteine 42-cysteine 78, cysteine 58-cysteine 74, and cysteine 61-cysteine 87. Valine 107 bears the Valine amide mark.

It belongs to the arthropod CHH/MIH/GIH/VIH hormone family.

The protein resides in the secreted. This Bombyx mori (Silk moth) protein is CHH-like protein (CHHL).